Consider the following 486-residue polypeptide: Nucleolar GTP-binding protein 2 (486 aa).

The tract at residues 1–20 (MGTGKKEKSRRIREGDTKDG) is disordered. 3 positions are modified to phosphoserine: S60, S85, and S155. Residues 212–373 (WNELYKVIDS…LIDCPGIVPP (162 aa)) form the CP-type G domain. Residues 322–329 (GYPNTGKS) and 366–370 (DCPGI) each bind GTP.

It belongs to the TRAFAC class YlqF/YawG GTPase family. NOG2 subfamily.

It is found in the nucleus. Its subcellular location is the nucleolus. GTPase that associates with pre-60S ribosomal subunits in the nucleolus and is required for their nuclear export and maturation. In Saccharomyces cerevisiae (strain ATCC 204508 / S288c) (Baker's yeast), this protein is Nucleolar GTP-binding protein 2 (NOG2).